Consider the following 346-residue polypeptide: Small ribosomal subunit biogenesis GTPase RsgA 2 (346 aa).

A CP-type G domain is found at 93–248 (EEQLIAANFD…VIDTPGMREF (156 aa)). Residues 138–141 (TKAD) and 190–198 (GSSGVGKSS) each bind GTP. 4 residues coordinate Zn(2+): Cys-271, Cys-276, His-278, and Cys-284.

The protein belongs to the TRAFAC class YlqF/YawG GTPase family. RsgA subfamily. As to quaternary structure, monomer. Associates with 30S ribosomal subunit, binds 16S rRNA. The cofactor is Zn(2+).

Its subcellular location is the cytoplasm. In terms of biological role, one of several proteins that assist in the late maturation steps of the functional core of the 30S ribosomal subunit. Helps release RbfA from mature subunits. May play a role in the assembly of ribosomal proteins into the subunit. Circularly permuted GTPase that catalyzes slow GTP hydrolysis, GTPase activity is stimulated by the 30S ribosomal subunit. The protein is Small ribosomal subunit biogenesis GTPase RsgA 2 of Listeria monocytogenes serotype 4b (strain F2365).